Consider the following 611-residue polypeptide: U-box domain-containing protein 12 (611 aa).

The U-box domain maps to 227-301 (IIPDEFRCPI…SQWCEANGIE (75 aa)). ARM repeat units lie at residues 355–394 (VNNRICIAEAGAIPLLVNLLSSSDPRTQEHAVTALLNLSI), 396–435 (ENNKASIVDSHAIPKIVEVLKTGSMETRENAAATLFSLSV), 437–476 (DENKVTIGAAGAIPPLINLLCDGSPRGKKDAATAIFNLCI), and 478–517 (QGNKVRAVKAGIVIHLMNFLVDPTGGMIDEALSLLSILAG).

It carries out the reaction S-ubiquitinyl-[E2 ubiquitin-conjugating enzyme]-L-cysteine + [acceptor protein]-L-lysine = [E2 ubiquitin-conjugating enzyme]-L-cysteine + N(6)-ubiquitinyl-[acceptor protein]-L-lysine.. The protein operates within protein modification; protein ubiquitination. In terms of biological role, possesses E3 ubiquitin-protein ligase in vitro. In Oryza sativa subsp. japonica (Rice), this protein is U-box domain-containing protein 12 (PUB12).